Here is a 753-residue protein sequence, read N- to C-terminus: 5-methyltetrahydropteroyltriglutamate--homocysteine methyltransferase (753 aa).

5-methyltetrahydropteroyltri-L-glutamate-binding positions include 17–20 and Lys-117; that span reads RELK. Residues 431–433 and Glu-484 each bind L-homocysteine; that span reads IGS. L-methionine-binding positions include 431 to 433 and Glu-484; that span reads IGS. 5-methyltetrahydropteroyltri-L-glutamate-binding positions include 515–516 and Trp-561; that span reads RC. Asp-599 is a binding site for L-homocysteine. Asp-599 provides a ligand contact to L-methionine. Glu-605 contributes to the 5-methyltetrahydropteroyltri-L-glutamate binding site. The Zn(2+) site is built by His-641, Cys-643, and Glu-665. Catalysis depends on His-694, which acts as the Proton donor. Cys-726 contributes to the Zn(2+) binding site.

It belongs to the vitamin-B12 independent methionine synthase family. As to quaternary structure, monomer. Requires Zn(2+) as cofactor.

It catalyses the reaction 5-methyltetrahydropteroyltri-L-glutamate + L-homocysteine = tetrahydropteroyltri-L-glutamate + L-methionine. It participates in amino-acid biosynthesis; L-methionine biosynthesis via de novo pathway; L-methionine from L-homocysteine (MetE route): step 1/1. In terms of biological role, catalyzes the transfer of a methyl group from 5-methyltetrahydrofolate to homocysteine resulting in methionine formation. This is 5-methyltetrahydropteroyltriglutamate--homocysteine methyltransferase from Escherichia coli (strain K12).